The primary structure comprises 79 residues: Delta-hormotoxin-Cpt1a (79 aa).

The first 20 residues, 1–20 (MKTQVLAVFVLCVLFCLAES), serve as a signal peptide directing secretion. Positions 21–31 (RTTLNKRIDIA) are excised as a propeptide. 3 disulfide bridges follow: C36-C75, C38-C66, and C56-C76.

It belongs to the sea anemone sodium channel inhibitory toxin family.

The protein localises to the secreted. Its subcellular location is the nematocyst. In terms of biological role, in neuromuscular preparation of crustaceans, the toxin increased neurotransmitter release, causing repetitive firing of the axons. May affect sodium channels (Nav). The sequence is that of Delta-hormotoxin-Cpt1a from Calliactis parasitica (Sea anemone).